The primary structure comprises 156 residues: MSWRRAASVGRRLVASGRILAGRRGAAGAAGSGMGNSTSSFWGKSTTTPVNQIQETISNNCVVIFSKTSCSYCSMAKKIFHDMNVNYKAVELDMLEYGNQFQDALHKMTGERTVPRIFVNGRFIGGAADTHRLHKEGKLLPLVHQCYLKKKQEERH.

The N-terminal 19 residues, 1–19 (MSWRRAASVGRRLVASGRI), are a transit peptide targeting the mitochondrion. Residues 50–150 (VNQIQETISN…PLVHQCYLKK (101 aa)) enclose the Glutaredoxin domain. [2Fe-2S] cluster is bound at residue Cys-61. Residue Lys-67 participates in glutathione binding. An S-glutathionyl cysteine; alternate modification is found at Cys-70. Cys-70 and Cys-73 form a disulfide bridge. Glutathione contacts are provided by Gln-102 and Val-114. Cys-146 is a binding site for [2Fe-2S] cluster.

Belongs to the glutaredoxin family. Monomer; active form. Homodimer; inactive form. The homodimer is probably linked by 1 2Fe-2S cluster. In terms of tissue distribution, widely expressed. Highly expressed in testis, and at much lower level in kidney and brain.

It is found in the mitochondrion. The protein localises to the nucleus. Its activity is regulated as follows. The 2Fe-2S present in the homodimer leads to inactivation of the enzyme. The 2Fe-2S may serve as a redox sensor: the presence of one-electron oxidants or reductants leading to the loss of the 2Fe-2S cluster, subsequent monomerization and activation of the enzyme. Functionally, glutathione-dependent oxidoreductase that facilitates the maintenance of mitochondrial redox homeostasis upon induction of apoptosis by oxidative stress. Involved in response to hydrogen peroxide and regulation of apoptosis caused by oxidative stress. Acts as a very efficient catalyst of monothiol reactions because of its high affinity for protein glutathione-mixed disulfides. Can receive electrons not only from glutathione (GSH), but also from thioredoxin reductase supporting both monothiol and dithiol reactions. Efficiently catalyzes both glutathionylation and deglutathionylation of mitochondrial complex I, which in turn regulates the superoxide production by the complex. Overexpression decreases the susceptibility to apoptosis and prevents loss of cardiolipin and cytochrome c release. This chain is Glutaredoxin-2, mitochondrial (Glrx2), found in Mus musculus (Mouse).